Here is a 283-residue protein sequence, read N- to C-terminus: Acetylglutamate kinase (283 aa).

Residues 64–65 (GG), R86, and N179 each bind substrate.

The protein belongs to the acetylglutamate kinase family. ArgB subfamily.

It is found in the cytoplasm. The catalysed reaction is N-acetyl-L-glutamate + ATP = N-acetyl-L-glutamyl 5-phosphate + ADP. It functions in the pathway amino-acid biosynthesis; L-arginine biosynthesis; N(2)-acetyl-L-ornithine from L-glutamate: step 2/4. Catalyzes the ATP-dependent phosphorylation of N-acetyl-L-glutamate. The chain is Acetylglutamate kinase from Campylobacter hominis (strain ATCC BAA-381 / DSM 21671 / CCUG 45161 / LMG 19568 / NCTC 13146 / CH001A).